Reading from the N-terminus, the 430-residue chain is Glutamate-1-semialdehyde 2,1-aminomutase (430 aa).

Position 265 is an N6-(pyridoxal phosphate)lysine (K265).

This sequence belongs to the class-III pyridoxal-phosphate-dependent aminotransferase family. HemL subfamily. Requires pyridoxal 5'-phosphate as cofactor.

Its subcellular location is the cytoplasm. The enzyme catalyses (S)-4-amino-5-oxopentanoate = 5-aminolevulinate. The protein operates within porphyrin-containing compound metabolism; protoporphyrin-IX biosynthesis; 5-aminolevulinate from L-glutamyl-tRNA(Glu): step 2/2. This Caldivirga maquilingensis (strain ATCC 700844 / DSM 13496 / JCM 10307 / IC-167) protein is Glutamate-1-semialdehyde 2,1-aminomutase.